The sequence spans 181 residues: Protein OPG005 (181 aa).

This chain is Protein OPG005 (OPG005), found in Vaccinia virus (strain Copenhagen) (VACV).